The sequence spans 371 residues: Queuine tRNA-ribosyltransferase (371 aa).

Catalysis depends on aspartate 90, which acts as the Proton acceptor. Residues aspartate 90–phenylalanine 94, aspartate 144, glutamine 189, and glycine 215 each bind substrate. An RNA binding region spans residues glycine 246–asparagine 252. Aspartate 265 acts as the Nucleophile in catalysis. Residues threonine 270–arginine 274 form an RNA binding; important for wobble base 34 recognition region. Residues cysteine 303, cysteine 305, cysteine 308, and histidine 334 each contribute to the Zn(2+) site.

The protein belongs to the queuine tRNA-ribosyltransferase family. As to quaternary structure, homodimer. Within each dimer, one monomer is responsible for RNA recognition and catalysis, while the other monomer binds to the replacement base PreQ1. The cofactor is Zn(2+).

It carries out the reaction 7-aminomethyl-7-carbaguanine + guanosine(34) in tRNA = 7-aminomethyl-7-carbaguanosine(34) in tRNA + guanine. It functions in the pathway tRNA modification; tRNA-queuosine biosynthesis. Its function is as follows. Catalyzes the base-exchange of a guanine (G) residue with the queuine precursor 7-aminomethyl-7-deazaguanine (PreQ1) at position 34 (anticodon wobble position) in tRNAs with GU(N) anticodons (tRNA-Asp, -Asn, -His and -Tyr). Catalysis occurs through a double-displacement mechanism. The nucleophile active site attacks the C1' of nucleotide 34 to detach the guanine base from the RNA, forming a covalent enzyme-RNA intermediate. The proton acceptor active site deprotonates the incoming PreQ1, allowing a nucleophilic attack on the C1' of the ribose to form the product. After dissociation, two additional enzymatic reactions on the tRNA convert PreQ1 to queuine (Q), resulting in the hypermodified nucleoside queuosine (7-(((4,5-cis-dihydroxy-2-cyclopenten-1-yl)amino)methyl)-7-deazaguanosine). This chain is Queuine tRNA-ribosyltransferase, found in Helicobacter pylori (strain HPAG1).